We begin with the raw amino-acid sequence, 144 residues long: MRLNTLSPAPGRIHAKKRVGRGIGSGLGKTAGRGHKGLKSRSGGSVRPGFEGGQMPLQIRLPKYGFTSRISLVTAEIRLSELNAIEGSVVDIETLKQAGLISSVIKRAKIFASGEVKKAVTVKGLAVTKGAKAAIEAAGGKVEE.

The tract at residues 24 to 52 (GSGLGKTAGRGHKGLKSRSGGSVRPGFEG) is disordered.

Belongs to the universal ribosomal protein uL15 family. Part of the 50S ribosomal subunit.

Its function is as follows. Binds to the 23S rRNA. This Cellvibrio japonicus (strain Ueda107) (Pseudomonas fluorescens subsp. cellulosa) protein is Large ribosomal subunit protein uL15.